Consider the following 100-residue polypeptide: Small ribosomal subunit protein uS14c (100 aa).

It belongs to the universal ribosomal protein uS14 family. In terms of assembly, part of the 30S ribosomal subunit.

It localises to the plastid. The protein resides in the chloroplast. Binds 16S rRNA, required for the assembly of 30S particles. This is Small ribosomal subunit protein uS14c from Nymphaea alba (White water-lily).